We begin with the raw amino-acid sequence, 463 residues long: Probable transport protein HsrA (463 aa).

A run of 14 helical transmembrane segments spans residues 10-30 (GLAW…TILN), 49-69 (MAII…AWAA), 82-102 (VFTF…ESLI), 107-127 (IQGI…IQAV), 139-159 (MATA…WLVI), 165-185 (WIFL…GSVM), 197-217 (WTGF…LDLL), 225-245 (SVTY…CGYA), 267-287 (IIAN…LPLM), 298-318 (MSGW…ILIG), 328-348 (TTLI…AWLD), 354-374 (TWII…FTSI), 393-413 (VLSI…SIIL), and 429-449 (AFSY…WSLM).

The protein belongs to the major facilitator superfamily. EmrB family.

The protein localises to the cell inner membrane. This chain is Probable transport protein HsrA (hsrA), found in Haemophilus influenzae (strain ATCC 51907 / DSM 11121 / KW20 / Rd).